The chain runs to 840 residues: Heat shock 70 kDa protein 4 (840 aa).

At Lys-53 the chain carries N6-acetyllysine. Ser-76 is modified (phosphoserine). A phosphotyrosine mark is found at Tyr-89 and Tyr-336. Phosphoserine occurs at positions 393 and 415. Lys-430 bears the N6-acetyllysine mark. The interval 500 to 575 (VHKSEESEEP…QAKKAKVKTS (76 aa)) is disordered. Positions 514–533 (QNAKEEEKMQVDQEEPHTEE) are enriched in basic and acidic residues. At Thr-538 the chain carries Phosphothreonine. At Ser-546 the chain carries Phosphoserine. A Phosphotyrosine modification is found at Tyr-660. Ser-756 bears the Phosphoserine mark. Residue Lys-773 is modified to N6-methyllysine. The interval 781 to 840 (PIISKPKPKVEPPKEEPKHAEQNGPVDGQGDNPGTQAAEHGADTAVPSDGDKKLPEMDID) is disordered. Composition is skewed to basic and acidic residues over residues 788-801 (PKVE…KHAE) and 829-840 (DGDKKLPEMDID).

It belongs to the heat shock protein 70 family. As to quaternary structure, interacts with TJP1/ZO-1. Ubiquitous. Highly expressed in testis.

It is found in the cytoplasm. The protein is Heat shock 70 kDa protein 4 (Hspa4) of Rattus norvegicus (Rat).